We begin with the raw amino-acid sequence, 282 residues long: Gap junction Cx32.7 protein (282 aa).

At 2–13 (GEWDLLGRLLDK) the chain is on the cytoplasmic side. The chain crosses the membrane as a helical span at residues 14–36 (VQSHSTVIGKVWLTVLFVFRILV). Topologically, residues 37 to 76 (LRTGADRVWGDEQSDFVCNTQQPGCENVCYDLAFPISHVR) are extracellular. The chain crosses the membrane as a helical span at residues 77–99 (FWFLQIIAVATPKLLYLGHVLHV). Over 100-148 (IHAEKKMKERMKKQAELDDQTNLFLRKAYKVPKYTKSSGKISIRGRLLR) the chain is Cytoplasmic. The chain crosses the membrane as a helical span at residues 149–171 (SYVYHLVAKIILEVLFIVGQYFL). Over 172–203 (YGFTLDTRYVCTRFPCPHKVDCFLSRPTEKSV) the chain is Extracellular. Residues 204-226 (IIWFMLVAAFVSLFLSLVELFYL) form a helical membrane-spanning segment. Over 227–282 (CVKAAKECMARRQDYTVTPVTPPLLARKSFKSHKEVFQNCVNEPASPENNMEEVHI) the chain is Cytoplasmic.

This sequence belongs to the connexin family. Alpha-type (group II) subfamily. A connexon is composed of a hexamer of connexins. Expressed equally in incompetent and competent ovaries.

Its subcellular location is the cell membrane. It is found in the cell junction. The protein localises to the gap junction. One gap junction consists of a cluster of closely packed pairs of transmembrane channels, the connexons, through which materials of low MW diffuse from one cell to a neighboring cell. This chain is Gap junction Cx32.7 protein, found in Micropogonias undulatus (Atlantic croaker).